Reading from the N-terminus, the 1264-residue chain is ATP-dependent helicase/nuclease subunit A (1264 aa).

Positions 12-482 (EQFTDSQWQA…IILAENFRSR (471 aa)) constitute a UvrD-like helicase ATP-binding domain. ATP is bound at residue 33–40 (ASAGSGKT). The UvrD-like helicase C-terminal domain maps to 520-808 (SEAADYSTEL…RVMTIHASKG (289 aa)).

It belongs to the helicase family. AddA subfamily. As to quaternary structure, heterodimer of AddA and AddB/RexB. Mg(2+) is required as a cofactor.

The catalysed reaction is Couples ATP hydrolysis with the unwinding of duplex DNA by translocating in the 3'-5' direction.. It carries out the reaction ATP + H2O = ADP + phosphate + H(+). Its function is as follows. The heterodimer acts as both an ATP-dependent DNA helicase and an ATP-dependent, dual-direction single-stranded exonuclease. Recognizes the chi site generating a DNA molecule suitable for the initiation of homologous recombination. The AddA nuclease domain is required for chi fragment generation; this subunit has the helicase and 3' -&gt; 5' nuclease activities. The polypeptide is ATP-dependent helicase/nuclease subunit A (Enterococcus faecalis (strain ATCC 700802 / V583)).